A 103-amino-acid chain; its full sequence is Large ribosomal subunit protein bL21 (103 aa).

The protein belongs to the bacterial ribosomal protein bL21 family. In terms of assembly, part of the 50S ribosomal subunit. Contacts protein L20.

In terms of biological role, this protein binds to 23S rRNA in the presence of protein L20. The polypeptide is Large ribosomal subunit protein bL21 (Burkholderia mallei (strain NCTC 10247)).